We begin with the raw amino-acid sequence, 115 residues long: Large ribosomal subunit protein bL19 (115 aa).

It belongs to the bacterial ribosomal protein bL19 family.

Functionally, this protein is located at the 30S-50S ribosomal subunit interface and may play a role in the structure and function of the aminoacyl-tRNA binding site. The polypeptide is Large ribosomal subunit protein bL19 (Lactobacillus acidophilus (strain ATCC 700396 / NCK56 / N2 / NCFM)).